Consider the following 105-residue polypeptide: ATP-dependent Clp protease adapter protein ClpS (105 aa).

Residues 1–27 are disordered; that stretch reads MVVMSAPTEPKSRPGTTGQRESAPEDV.

The protein belongs to the ClpS family. Binds to the N-terminal domain of the chaperone ClpA.

Its function is as follows. Involved in the modulation of the specificity of the ClpAP-mediated ATP-dependent protein degradation. This chain is ATP-dependent Clp protease adapter protein ClpS, found in Mycolicibacterium paratuberculosis (strain ATCC BAA-968 / K-10) (Mycobacterium paratuberculosis).